The chain runs to 126 residues: Small ribosomal subunit protein bS6 (126 aa).

A disordered region spans residues valine 101 to glutamate 126. The span at lysine 104–glutamate 126 shows a compositional bias: basic and acidic residues.

The protein belongs to the bacterial ribosomal protein bS6 family.

Its function is as follows. Binds together with bS18 to 16S ribosomal RNA. This chain is Small ribosomal subunit protein bS6, found in Aliivibrio salmonicida (strain LFI1238) (Vibrio salmonicida (strain LFI1238)).